Here is a 147-residue protein sequence, read N- to C-terminus: Large ribosomal subunit protein bL9 (147 aa).

This sequence belongs to the bacterial ribosomal protein bL9 family.

In terms of biological role, binds to the 23S rRNA. The chain is Large ribosomal subunit protein bL9 from Mesoplasma florum (strain ATCC 33453 / NBRC 100688 / NCTC 11704 / L1) (Acholeplasma florum).